The primary structure comprises 95 residues: MTKSELIEKLAMRQSQLSAKEVESAIKEMLEQMAQTLEGGDRIEIRGFGSFSLHFRAPRTGRNPKTGTSVELDGKYVPHFKPGKELRERVDAINV.

The disordered stretch occupies residues 56-76 (RAPRTGRNPKTGTSVELDGKY).

Belongs to the bacterial histone-like protein family. Heterodimer of an alpha and a beta chain.

Its function is as follows. This protein is one of the two subunits of integration host factor, a specific DNA-binding protein that functions in genetic recombination as well as in transcriptional and translational control. The polypeptide is Integration host factor subunit beta (Shewanella woodyi (strain ATCC 51908 / MS32)).